The sequence spans 157 residues: 2-C-methyl-D-erythritol 2,4-cyclodiphosphate synthase (157 aa).

Residues aspartate 9 and histidine 11 each coordinate a divalent metal cation. Residues 9–11 and 35–36 each bind 4-CDP-2-C-methyl-D-erythritol 2-phosphate; these read DVH and HS. Histidine 43 lines the a divalent metal cation pocket. 4-CDP-2-C-methyl-D-erythritol 2-phosphate-binding positions include 57 to 59, 62 to 66, 133 to 136, phenylalanine 140, and lysine 143; these read DIG, FPETD, and TTME.

It belongs to the IspF family. In terms of assembly, homotrimer. Requires a divalent metal cation as cofactor.

It carries out the reaction 4-CDP-2-C-methyl-D-erythritol 2-phosphate = 2-C-methyl-D-erythritol 2,4-cyclic diphosphate + CMP. It functions in the pathway isoprenoid biosynthesis; isopentenyl diphosphate biosynthesis via DXP pathway; isopentenyl diphosphate from 1-deoxy-D-xylulose 5-phosphate: step 4/6. Its function is as follows. Involved in the biosynthesis of isopentenyl diphosphate (IPP) and dimethylallyl diphosphate (DMAPP), two major building blocks of isoprenoid compounds. Catalyzes the conversion of 4-diphosphocytidyl-2-C-methyl-D-erythritol 2-phosphate (CDP-ME2P) to 2-C-methyl-D-erythritol 2,4-cyclodiphosphate (ME-CPP) with a corresponding release of cytidine 5-monophosphate (CMP). The protein is 2-C-methyl-D-erythritol 2,4-cyclodiphosphate synthase of Enterococcus faecalis (strain ATCC 700802 / V583).